The chain runs to 539 residues: Phosphoenolpyruvate carboxykinase (ATP) (539 aa).

Substrate-binding residues include R64, Y206, and K212. ATP is bound by residues K212, H231, and 247-255; that span reads GLSGTGKTT. Residues K212 and H231 each contribute to the Mn(2+) site. A Mn(2+)-binding site is contributed by D268. ATP contacts are provided by residues E296, R332, 448–449, and T454; that span reads RI. R332 serves as a coordination point for substrate.

It belongs to the phosphoenolpyruvate carboxykinase (ATP) family. As to quaternary structure, monomer. Mn(2+) is required as a cofactor.

Its subcellular location is the cytoplasm. The enzyme catalyses oxaloacetate + ATP = phosphoenolpyruvate + ADP + CO2. The protein operates within carbohydrate biosynthesis; gluconeogenesis. Functionally, involved in the gluconeogenesis. Catalyzes the conversion of oxaloacetate (OAA) to phosphoenolpyruvate (PEP) through direct phosphoryl transfer between the nucleoside triphosphate and OAA. This Sodalis glossinidius (strain morsitans) protein is Phosphoenolpyruvate carboxykinase (ATP).